The following is a 490-amino-acid chain: MDPFVVLVLCLSCLLLLSIWRQSSGRGKLPPGPTPLPVIGNILQIDIKDVSKSLTNLSKIYGPVFTLYFGLERMVVLHGYEVVKEALIDLGEEFSGRGHFPLAERANRGFGIVFSNGKRWKEIRRFSLMTLRNFGMGKRSIEDRVQEEARCLVEELRKTKASPCDPTFILGCAPCNVICSIIFQKRFDYKDQQFLNLMEKLNENIRIVSTPWIQICNNFPTIIDYFPGTHNKLLKNLAFMESDILEKVKEHQESMDINNPRDFIDCFLIKMEKEKQNQQSEFTIENLVITAADLLGAGTETTSTTLRYALLLLLKHPEVTAKVQEEIERVIGRNRSPCMQDRGHMPYTDAVVHEVQRYIDLIPTSLPHAVTCDVKFRNYLIPKGTTILTSLTSVLHDNKEFPNPEMFDPRHFLDEGGNFKKSNYFMPFSAGKRICVGEGLARMELFLFLTFILQNFNLKSLIDPKDLDTTPVVNGFASVPPFYQLCFIPV.

Cys435 lines the heme pocket.

This sequence belongs to the cytochrome P450 family. Heme serves as cofactor.

It localises to the endoplasmic reticulum membrane. Its subcellular location is the microsome membrane. It catalyses the reaction an organic molecule + reduced [NADPH--hemoprotein reductase] + O2 = an alcohol + oxidized [NADPH--hemoprotein reductase] + H2O + H(+). The catalysed reaction is (5Z,8Z,11Z)-eicosatrienoate + reduced [NADPH--hemoprotein reductase] + O2 = 19-hydroxy-(5Z,8Z,11Z)-eicosatrienoate + oxidized [NADPH--hemoprotein reductase] + H2O + H(+). It carries out the reaction (5Z,8Z,11Z,14Z)-eicosatetraenoate + reduced [NADPH--hemoprotein reductase] + O2 = 19-hydroxy-(5Z,8Z,11Z,14Z)-eicosatetraenoate + oxidized [NADPH--hemoprotein reductase] + H2O + H(+). The enzyme catalyses (5Z,8Z,11Z,14Z,17Z)-eicosapentaenoate + reduced [NADPH--hemoprotein reductase] + O2 = 19-hydroxy-(5Z,8Z,11Z,14Z,17Z)-eicosapentaenoate + oxidized [NADPH--hemoprotein reductase] + H2O + H(+). It catalyses the reaction (4Z,7Z,10Z,13Z,16Z,19Z)-docosahexaenoate + reduced [NADPH--hemoprotein reductase] + O2 = 21-hydroxy-(4Z,7Z,10Z,13Z,16Z,19Z)-docosahexaenoate + oxidized [NADPH--hemoprotein reductase] + H2O + H(+). The catalysed reaction is (5Z,8Z,11Z,14Z)-eicosatetraenoate + reduced [NADPH--hemoprotein reductase] + O2 = (8R,9S)-epoxy-(5Z,11Z,14Z)-eicosatrienoate + oxidized [NADPH--hemoprotein reductase] + H2O + H(+). It carries out the reaction (5Z,8Z,11Z,14Z)-eicosatetraenoate + reduced [NADPH--hemoprotein reductase] + O2 = (11R,12S)-epoxy-(5Z,8Z,14Z)-eicosatrienoate + oxidized [NADPH--hemoprotein reductase] + H2O + H(+). The enzyme catalyses (5Z,8Z,11Z,14Z)-eicosatetraenoate + reduced [NADPH--hemoprotein reductase] + O2 = (11S,12R)-epoxy-(5Z,8Z,14Z)-eicosatrienoate + oxidized [NADPH--hemoprotein reductase] + H2O + H(+). It catalyses the reaction (5Z,8Z,11Z,14Z)-eicosatetraenoate + reduced [NADPH--hemoprotein reductase] + O2 = (14R,15S)-epoxy-(5Z,8Z,11Z)-eicosatrienoate + oxidized [NADPH--hemoprotein reductase] + H2O + H(+). The catalysed reaction is (5Z,8Z,11Z,14Z,17Z)-eicosapentaenoate + reduced [NADPH--hemoprotein reductase] + O2 = (17R,18S)-epoxy-(5Z,8Z,11Z,14Z)-eicosatetraenoate + oxidized [NADPH--hemoprotein reductase] + H2O + H(+). It carries out the reaction (4Z,7Z,10Z,13Z,16Z,19Z)-docosahexaenoate + reduced [NADPH--hemoprotein reductase] + O2 = (19R,20S)-epoxy-(4Z,7Z,10Z,13Z,16Z)-docosapentaenoate + oxidized [NADPH--hemoprotein reductase] + H2O + H(+). The enzyme catalyses (4Z,7Z,10Z,13Z,16Z,19Z)-docosahexaenoate + reduced [NADPH--hemoprotein reductase] + O2 = (19S,20R)-epoxy-(4Z,7Z,10Z,13Z,16Z)-docosapentaenoate + oxidized [NADPH--hemoprotein reductase] + H2O + H(+). It catalyses the reaction (4R)-limonene + reduced [NADPH--hemoprotein reductase] + O2 = (1R,5S)-carveol + oxidized [NADPH--hemoprotein reductase] + H2O + H(+). The catalysed reaction is (4S)-limonene + reduced [NADPH--hemoprotein reductase] + O2 = (1S,5R)-carveol + oxidized [NADPH--hemoprotein reductase] + H2O + H(+). It carries out the reaction (4S)-limonene + reduced [NADPH--hemoprotein reductase] + O2 = (4S)-perillyl alcohol + oxidized [NADPH--hemoprotein reductase] + H2O + H(+). The enzyme catalyses fenbendazole + reduced [NADPH--hemoprotein reductase] + O2 = 4'-hydroxyfenbendazole + oxidized [NADPH--hemoprotein reductase] + H2O + H(+). It participates in lipid metabolism; fatty acid metabolism. It functions in the pathway terpene metabolism; (4R)-limonene degradation. Its function is as follows. A cytochrome P450 monooxygenase involved in the metabolism of polyunsaturated fatty acids (PUFA). Mechanistically, uses molecular oxygen inserting one oxygen atom into a substrate, and reducing the second into a water molecule, with two electrons provided by NADPH via cytochrome P450 reductase (NADPH--hemoprotein reductase). Catalyzes the hydroxylation of carbon-hydrogen bonds. Hydroxylates PUFA specifically at the omega-1 position. Catalyzes the epoxidation of double bonds of PUFA. Also metabolizes plant monoterpenes such as limonene. Oxygenates (R)- and (S)-limonene to produce carveol and perillyl alcohol. Responsible for the metabolism of a number of therapeutic agents such as the anticonvulsant drug S-mephenytoin, omeprazole, proguanil, certain barbiturates, diazepam, propranolol, citalopram and imipramine. Hydroxylates fenbendazole at the 4' position. This chain is Cytochrome P450 2C19 (CYP2C19), found in Homo sapiens (Human).